Consider the following 822-residue polypeptide: Cadherin-3 (822 aa).

The N-terminal stretch at methionine 1–serine 25 is a signal peptide. A propeptide spanning residues glutamate 26–arginine 99 is cleaved from the precursor. 5 Cadherin domains span residues glutamate 100–phenylalanine 207, threonine 208–phenylalanine 320, glutamate 321–phenylalanine 432, valine 433–proline 538, and isoleucine 539–lysine 645. The Extracellular portion of the chain corresponds to glutamate 100–glycine 647. N-linked (GlcNAc...) asparagine glycosylation is present at asparagine 192. The N-linked (GlcNAc...) asparagine glycan is linked to asparagine 558. Residues phenylalanine 648–valine 670 traverse the membrane as a helical segment. Topologically, residues arginine 671 to aspartate 822 are cytoplasmic.

As to quaternary structure, interacts with CDCP1 and CTNNB1.

It is found in the cell membrane. Functionally, cadherins are calcium-dependent cell adhesion proteins. They preferentially interact with themselves in a homophilic manner in connecting cells; cadherins may thus contribute to the sorting of heterogeneous cell types. This is Cadherin-3 (Cdh3) from Mus musculus (Mouse).